Here is a 295-residue protein sequence, read N- to C-terminus: 2-methylisocitrate lyase (295 aa).

Residue 45–47 (SGG) participates in substrate binding. Aspartate 85 and aspartate 87 together coordinate Mg(2+). Substrate is bound by residues 123–124 (CG), arginine 158, glutamate 188, 210–212 (NIT), arginine 241, and arginine 270.

Belongs to the isocitrate lyase/PEP mutase superfamily. Methylisocitrate lyase family. Homotetramer; dimer of dimers. Mg(2+) is required as a cofactor.

The catalysed reaction is (2S,3R)-3-hydroxybutane-1,2,3-tricarboxylate = pyruvate + succinate. The protein operates within organic acid metabolism; propanoate degradation. Functionally, involved in the catabolism of short chain fatty acids (SCFA) via the 2-methylcitrate cycle I (propionate degradation route). Catalyzes the thermodynamically favored C-C bond cleavage of (2R,3S)-2-methylisocitrate to yield pyruvate and succinate via an alpha-carboxy-carbanion intermediate. The protein is 2-methylisocitrate lyase of Salmonella typhimurium (strain LT2 / SGSC1412 / ATCC 700720).